A 202-amino-acid polypeptide reads, in one-letter code: Venom allergen 5.02 (202 aa).

Disulfide bonds link cysteine 4-cysteine 16, cysteine 8-cysteine 101, cysteine 26-cysteine 94, and cysteine 168-cysteine 185. The 142-residue stretch at 46 to 187 folds into the SCP domain; that stretch reads KQHNEFRQKV…WHRHYLVCNY (142 aa).

It belongs to the CRISP family. Venom allergen 5-like subfamily. In terms of tissue distribution, expressed by the venom gland.

Its subcellular location is the secreted. The sequence is that of Venom allergen 5.02 from Vespa crabro (European hornet).